The primary structure comprises 116 residues: G antigen 10 (116 aa).

Positions 1 to 116 (MSWRGRSTYR…PEEGEKQSQC (116 aa)) are disordered. Over residues 31 to 44 (FSDEVEPATPEEGE) the composition is skewed to acidic residues. Composition is skewed to basic and acidic residues over residues 71 to 80 (PEADSQEQVH) and 102 to 116 (EEVK…QSQC).

It belongs to the GAGE family.

The chain is G antigen 10 (GAGE10) from Homo sapiens (Human).